The primary structure comprises 65 residues: Large ribosomal subunit protein bL35 (65 aa).

The protein belongs to the bacterial ribosomal protein bL35 family.

The chain is Large ribosomal subunit protein bL35 from Prochlorococcus marinus (strain MIT 9301).